The chain runs to 427 residues: Enolase 1 (427 aa).

Gln162 is a binding site for (2R)-2-phosphoglycerate. The active-site Proton donor is the Glu204. Residues Asp241, Glu285, and Asp312 each contribute to the Mg(2+) site. (2R)-2-phosphoglycerate contacts are provided by Lys337, Arg366, Ser367, and Lys388. Residue Lys337 is the Proton acceptor of the active site.

Belongs to the enolase family. Requires Mg(2+) as cofactor.

The protein localises to the cytoplasm. It is found in the secreted. It localises to the cell surface. The enzyme catalyses (2R)-2-phosphoglycerate = phosphoenolpyruvate + H2O. Its pathway is carbohydrate degradation; glycolysis; pyruvate from D-glyceraldehyde 3-phosphate: step 4/5. In terms of biological role, catalyzes the reversible conversion of 2-phosphoglycerate (2-PG) into phosphoenolpyruvate (PEP). It is essential for the degradation of carbohydrates via glycolysis. This Chlorobaculum tepidum (strain ATCC 49652 / DSM 12025 / NBRC 103806 / TLS) (Chlorobium tepidum) protein is Enolase 1.